The chain runs to 228 residues: THAP domain-containing protein 2 (228 aa).

The segment at 1-80 (MPTNCAAAGC…LKMDAVPTIF (80 aa)) adopts a THAP-type zinc-finger fold. The short motif at 123-126 (EHSY) is the HCFC1-binding motif (HBM) element.

This Homo sapiens (Human) protein is THAP domain-containing protein 2 (THAP2).